A 178-amino-acid chain; its full sequence is MHPMIPAEYISNIIYEGPGADSLSAAAEQLRLMYNSANMTAKSLTDRLGELQENWKGSSSDLMADAAGRYLDWLTKHSRQILETAYVIDFLAYVYEETRHKVVPPATIANNREEVHRLIASNVAGVNTPAIAGLDAQYQQYRAQNIAVMNDYQSTARFILAYLPRWQEPPQIYGGGGG.

The protein belongs to the mycobacterial PPE family.

This is an uncharacterized protein from Mycobacterium tuberculosis (strain CDC 1551 / Oshkosh).